We begin with the raw amino-acid sequence, 303 residues long: Quinolinate synthase (303 aa).

Residues histidine 25 and serine 42 each coordinate iminosuccinate. [4Fe-4S] cluster is bound at residue cysteine 87. Residues 113–115 and serine 130 each bind iminosuccinate; that span reads YVN. Cysteine 174 serves as a coordination point for [4Fe-4S] cluster. Iminosuccinate-binding positions include 200 to 202 and threonine 217; that span reads HPE. Position 260 (cysteine 260) interacts with [4Fe-4S] cluster.

Belongs to the quinolinate synthase family. Type 2 subfamily. As to quaternary structure, homodimer. The cofactor is [4Fe-4S] cluster.

The protein resides in the cytoplasm. It catalyses the reaction iminosuccinate + dihydroxyacetone phosphate = quinolinate + phosphate + 2 H2O + H(+). It functions in the pathway cofactor biosynthesis; NAD(+) biosynthesis; quinolinate from iminoaspartate: step 1/1. Catalyzes the condensation of iminoaspartate with dihydroxyacetone phosphate to form quinolinate. In Pyrococcus furiosus (strain ATCC 43587 / DSM 3638 / JCM 8422 / Vc1), this protein is Quinolinate synthase.